A 651-amino-acid polypeptide reads, in one-letter code: Protein cueball (651 aa).

Positions 1-21 are cleaved as a signal peptide; the sequence is MILRLFILLSIITVYLQLSVG. The Extracellular portion of the chain corresponds to 22–540; that stretch reads IQQQFEFAIT…VCLAPNAWTG (519 aa). N-linked (GlcNAc...) asparagine glycosylation is found at Asn-77, Asn-102, and Asn-114. LDL-receptor class B repeat units lie at residues 115-162, 163-207, and 208-253; these read RTIY…DICG, RKLY…DQGA, and KRIF…TRNA. Asn-183 carries N-linked (GlcNAc...) asparagine glycosylation. Positions 290 to 311 are disordered; sequence VEGEEGTGAMDDNDIWPVGDFE. Asn-324 is a glycosylation site (N-linked (GlcNAc...) asparagine). EGF-like domains lie at 374 to 408, 409 to 440, and 443 to 480; these read QLDELQREHCLGGGTYYPQQKFCVCVPGYKGTRCE, TNECHNFCVHGTCQISEMGYPKCYCQPGYSGE, and EVKKCLNFCQNGGDCQLDELTGEASCQCPSNFGGLRCE. 7 disulfides stabilise this stretch: Cys-383-Cys-396, Cys-398-Cys-407, Cys-412-Cys-421, Cys-416-Cys-431, Cys-447-Cys-457, Cys-451-Cys-468, and Cys-470-Cys-479. N-linked (GlcNAc...) asparagine glycans are attached at residues Asn-482 and Asn-499. The helical transmembrane segment at 541-561 threads the bilayer; sequence SVLMPLMISLILILLLLTIFI. Residues 562–651 lie on the Cytoplasmic side of the membrane; the sequence is HGLRRLYKPK…LIHNMEDDLY (90 aa).

It belongs to the cueball family.

Its subcellular location is the cell membrane. Its function is as follows. Has a role in spermatogenesis and oogenesis. This Drosophila willistoni (Fruit fly) protein is Protein cueball.